A 226-amino-acid chain; its full sequence is Uridylate kinase (226 aa).

9–10 provides a ligand contact to ATP; the sequence is GS. A UMP-binding site is contributed by G46. G47 and R51 together coordinate ATP. Residues D68 and 116–122 contribute to the UMP site; that span reads THPGHTT. Residues T142, N143, Y148, and D151 each contribute to the ATP site.

This sequence belongs to the UMP kinase family. As to quaternary structure, homohexamer.

It is found in the cytoplasm. It catalyses the reaction UMP + ATP = UDP + ADP. The protein operates within pyrimidine metabolism; CTP biosynthesis via de novo pathway; UDP from UMP (UMPK route): step 1/1. Inhibited by UTP. Its function is as follows. Catalyzes the reversible phosphorylation of UMP to UDP. This Methanocaldococcus jannaschii (strain ATCC 43067 / DSM 2661 / JAL-1 / JCM 10045 / NBRC 100440) (Methanococcus jannaschii) protein is Uridylate kinase.